Here is a 134-residue protein sequence, read N- to C-terminus: Small ribosomal subunit protein uS11 (134 aa).

It belongs to the universal ribosomal protein uS11 family. As to quaternary structure, component of the small ribosomal subunit.

It is found in the cytoplasm. In Encephalitozoon cuniculi (strain GB-M1) (Microsporidian parasite), this protein is Small ribosomal subunit protein uS11 (RPS14).